The sequence spans 692 residues: Elongation factor G 2 (692 aa).

Positions 8-283 constitute a tr-type G domain; it reads EKTRNIGIMA…SVVAYLPSPL (276 aa). GTP is bound by residues 17 to 24, 81 to 85, and 135 to 138; these read AHIDAGKT, DTPGH, and NKMD.

It belongs to the TRAFAC class translation factor GTPase superfamily. Classic translation factor GTPase family. EF-G/EF-2 subfamily.

It localises to the cytoplasm. In terms of biological role, catalyzes the GTP-dependent ribosomal translocation step during translation elongation. During this step, the ribosome changes from the pre-translocational (PRE) to the post-translocational (POST) state as the newly formed A-site-bound peptidyl-tRNA and P-site-bound deacylated tRNA move to the P and E sites, respectively. Catalyzes the coordinated movement of the two tRNA molecules, the mRNA and conformational changes in the ribosome. This is Elongation factor G 2 from Geobacter sulfurreducens (strain ATCC 51573 / DSM 12127 / PCA).